The primary structure comprises 416 residues: Serine hydroxymethyltransferase (416 aa).

(6S)-5,6,7,8-tetrahydrofolate is bound by residues Leu118 and 122–124 (GHL). Residue Lys226 is modified to N6-(pyridoxal phosphate)lysine. Position 242 (Glu242) interacts with (6S)-5,6,7,8-tetrahydrofolate.

It belongs to the SHMT family. Homodimer. Requires pyridoxal 5'-phosphate as cofactor.

The protein resides in the cytoplasm. The enzyme catalyses (6R)-5,10-methylene-5,6,7,8-tetrahydrofolate + glycine + H2O = (6S)-5,6,7,8-tetrahydrofolate + L-serine. It participates in one-carbon metabolism; tetrahydrofolate interconversion. Its pathway is amino-acid biosynthesis; glycine biosynthesis; glycine from L-serine: step 1/1. Functionally, catalyzes the reversible interconversion of serine and glycine with tetrahydrofolate (THF) serving as the one-carbon carrier. This reaction serves as the major source of one-carbon groups required for the biosynthesis of purines, thymidylate, methionine, and other important biomolecules. Also exhibits THF-independent aldolase activity toward beta-hydroxyamino acids, producing glycine and aldehydes, via a retro-aldol mechanism. The protein is Serine hydroxymethyltransferase of Helicobacter pylori (strain HPAG1).